Reading from the N-terminus, the 623-residue chain is MAEEKRQFQAEVGKLLDIVVHSLYSNKEIFLRELISNASDSCDRLRYGAITEPDLLDGDSEFRIRLVPDKDAGTLTIIDNGQGMSHDELIANLGTIAKSGTSEFLARLTGDAKKDVSLIGQFGVGFYSAFMVAEEVTVTSRKAGEAKGWKWVSDGKGEFTVSPAEDAARGAAITLKLREGETEFLDAFRLKSIVKRYSDHIAIPVTLKDADKDEETINSASALWTRSKSEITPEQYKEFYHHVAHAFDEPWSTLHYKAEGAIEYTGLLFIPSSKPLDIFHPDRKQHVKLYVRRVFITDDCEELLPPYLRFVRGVVDSQDLPLNVSREMLQHNPVLSKIRTGLVKRILGELKKKSEDAEGKYDEFWAAFGPVLKEGIYEDFERKTDILELCRFRSTHGDGLTTLADYVARMKDGQDAIYTITGDDLDQLKKSPQLEGFAAKGVEVLLLTDPIDEFWVSAVRSYAEKDFRSVAAAGADLSKVKAPEGAEDKKADEAPADELTTLIEAVKLALGERVKDVRPSERLTESAVCLVAAEGEMSMHLEKMLRAHNQAPGERARILEINPRHALIKGLAARVKAGGTDAGLEDAAFLLLDQARIIEGEPPADPAAFARRMVSVMEKGLLG.

The a; substrate-binding stretch occupies residues 1 to 326 (MAEEKRQFQA…SQDLPLNVSR (326 aa)). Residues 327–543 (EMLQHNPVLS…EGEMSMHLEK (217 aa)) form a b region. The tract at residues 544-623 (MLRAHNQAPG…VSVMEKGLLG (80 aa)) is c.

This sequence belongs to the heat shock protein 90 family. In terms of assembly, homodimer.

Its subcellular location is the cytoplasm. Its function is as follows. Molecular chaperone. Has ATPase activity. This Paramagnetospirillum magneticum (strain ATCC 700264 / AMB-1) (Magnetospirillum magneticum) protein is Chaperone protein HtpG.